The primary structure comprises 56 residues: MPDQAQKTRPVGPGPSGGGEGPGSPKVEKPNTEELLKRMRKVDPDQAKRYRQRTGQ.

A disordered region spans residues 1 to 56; it reads MPDQAQKTRPVGPGPSGGGEGPGSPKVEKPNTEELLKRMRKVDPDQAKRYRQRTGQ. Over residues 26 to 48 the composition is skewed to basic and acidic residues; the sequence is KVEKPNTEELLKRMRKVDPDQAK. Gln-56 bears the Deamidated glutamine mark. An Isoglutamyl lysine isopeptide (Gln-Lys) (interchain with K-? in acceptor proteins) cross-link involves residue Gln-56.

The protein belongs to the ubiquitin-like protein UBact family. May be modified by deamidation of its C-terminal glutamine to glutamate by the adjacently encoded deamidase. This could be a prerequisite to the subsequent conjugation, as shown in the other prokaryotic ubiquitin-like protein Pup.

Its function is as follows. May function as a protein modifier covalently attached to lysine residues of substrate proteins. This may serve to target the modified proteins for degradation by proteasomes. This chain is Prokaryotic ubiquitin-like protein UBact, found in Pedosphaera parvula (strain Ellin514).